The sequence spans 197 residues: 3-isopropylmalate dehydratase small subunit (197 aa).

This sequence belongs to the LeuD family. LeuD type 1 subfamily. In terms of assembly, heterodimer of LeuC and LeuD.

The catalysed reaction is (2R,3S)-3-isopropylmalate = (2S)-2-isopropylmalate. It functions in the pathway amino-acid biosynthesis; L-leucine biosynthesis; L-leucine from 3-methyl-2-oxobutanoate: step 2/4. Catalyzes the isomerization between 2-isopropylmalate and 3-isopropylmalate, via the formation of 2-isopropylmaleate. The polypeptide is 3-isopropylmalate dehydratase small subunit (Geobacillus kaustophilus (strain HTA426)).